The chain runs to 248 residues: Putative amino-acid ABC transporter-binding protein PatH (248 aa).

A signal peptide spans 1 to 21 (MKNWIKVAVAAIALSAATVQA).

It belongs to the bacterial solute-binding protein 3 family.

Its subcellular location is the periplasm. Probably part of a binding-protein-dependent transport system for an amino acid. The polypeptide is Putative amino-acid ABC transporter-binding protein PatH (patH) (Vibrio harveyi (Beneckea harveyi)).